A 395-amino-acid chain; its full sequence is Elongation factor Tu (395 aa).

Positions 10–204 (KSHVNVGTLG…AVDEYIPTPE (195 aa)) constitute a tr-type G domain. The segment at 19–26 (GHVDHGKT) is G1. 19–26 (GHVDHGKT) contributes to the GTP binding site. Threonine 26 contributes to the Mg(2+) binding site. Positions 60–64 (GITIS) are G2. The G3 stretch occupies residues 81–84 (DCPG). GTP contacts are provided by residues 81–85 (DCPGH) and 136–139 (NKTD). The G4 stretch occupies residues 136–139 (NKTD). Residues 174 to 176 (SAL) are G5.

It belongs to the TRAFAC class translation factor GTPase superfamily. Classic translation factor GTPase family. EF-Tu/EF-1A subfamily. In terms of assembly, monomer.

It is found in the cytoplasm. The catalysed reaction is GTP + H2O = GDP + phosphate + H(+). Functionally, GTP hydrolase that promotes the GTP-dependent binding of aminoacyl-tRNA to the A-site of ribosomes during protein biosynthesis. The chain is Elongation factor Tu from Oceanobacillus iheyensis (strain DSM 14371 / CIP 107618 / JCM 11309 / KCTC 3954 / HTE831).